A 44-amino-acid chain; its full sequence is Photosystem I reaction center subunit IX (44 aa).

Residues 7 to 27 (YLSVAPVLSTLWFGALAGLLI) traverse the membrane as a helical segment.

It belongs to the PsaJ family.

The protein resides in the plastid. It localises to the chloroplast thylakoid membrane. Its function is as follows. May help in the organization of the PsaE and PsaF subunits. The chain is Photosystem I reaction center subunit IX from Eucalyptus globulus subsp. globulus (Tasmanian blue gum).